The following is a 157-amino-acid chain: Short-type peptidyl-prolyl cis-trans isomerase (157 aa).

One can recognise a PPIase FKBP-type domain in the interval 1-95 (MINLIKKGDY…RDERLIQEIP (95 aa)). Residues 86-137 (RDERLIQEIPKEMFADADFEPQEGMLILASGIPAKIIKVTDDTVTLDFNHEL) are IF.

It belongs to the FKBP-type PPIase family.

The protein resides in the cytoplasm. The catalysed reaction is [protein]-peptidylproline (omega=180) = [protein]-peptidylproline (omega=0). Its function is as follows. Catalyzes the cis-trans isomerization of peptidyl prolyl bonds and accelerates protein folding. Also exhibits chaperone-like activity. This Methanocaldococcus jannaschii (strain ATCC 43067 / DSM 2661 / JAL-1 / JCM 10045 / NBRC 100440) (Methanococcus jannaschii) protein is Short-type peptidyl-prolyl cis-trans isomerase.